A 734-amino-acid polypeptide reads, in one-letter code: Photosystem I P700 chlorophyll a apoprotein A2 (734 aa).

Transmembrane regions (helical) follow at residues 46–69 (IFASHFGQLAIIFLWTSGNLFHVA), 135–158 (LYTGAIFLLAVAALFLLASWLHLQ), 175–199 (LNHHLSGLFGVSSLAWTGHLIHVAI), 273–291 (MAHHHLAIAVVFIIAGHMY), 330–353 (LHFQLGLALAALGVITSLVAQHMY), 369–395 (AALYTHHQYIAGFIMAGAFAHGAIFFL), 417–439 (AIISHLSWASLFLGFHTLGLYVH), and 517–535 (FLVHHAIALGLHTTTLILV). The [4Fe-4S] cluster site is built by Cys559 and Cys568. The next 2 membrane-spanning stretches (helical) occupy residues 575–596 (AFYLAVFWMLNTIGWVTFYWHW) and 643–665 (LSVWAWMFLFGHLVWATGFMFLI). Chlorophyll a contacts are provided by His654, Met662, and Tyr670. Trp671 is a phylloquinone binding site. Residues 707–727 (LVGLAHFSVGYIFTYAAFLIA) form a helical membrane-spanning segment.

Belongs to the PsaA/PsaB family. In terms of assembly, the PsaA/B heterodimer binds the P700 chlorophyll special pair and subsequent electron acceptors. PSI consists of a core antenna complex that captures photons, and an electron transfer chain that converts photonic excitation into a charge separation. The eukaryotic PSI reaction center is composed of at least 11 subunits. Requires P700 is a chlorophyll a/chlorophyll a' dimer, A0 is one or more chlorophyll a, A1 is one or both phylloquinones and FX is a shared 4Fe-4S iron-sulfur center. as cofactor.

The protein localises to the plastid. It localises to the chloroplast thylakoid membrane. The enzyme catalyses reduced [plastocyanin] + hnu + oxidized [2Fe-2S]-[ferredoxin] = oxidized [plastocyanin] + reduced [2Fe-2S]-[ferredoxin]. PsaA and PsaB bind P700, the primary electron donor of photosystem I (PSI), as well as the electron acceptors A0, A1 and FX. PSI is a plastocyanin-ferredoxin oxidoreductase, converting photonic excitation into a charge separation, which transfers an electron from the donor P700 chlorophyll pair to the spectroscopically characterized acceptors A0, A1, FX, FA and FB in turn. Oxidized P700 is reduced on the lumenal side of the thylakoid membrane by plastocyanin. This is Photosystem I P700 chlorophyll a apoprotein A2 from Adiantum capillus-veneris (Maidenhair fern).